Here is a 437-residue protein sequence, read N- to C-terminus: Perilipin-2 (437 aa).

A2 bears the N-acetylalanine mark. S215 is modified (phosphoserine). Phosphotyrosine is present on Y232. Residues 412 to 437 are disordered; the sequence is SQNAQDQGAEMDKSSQETQRSEHKTH. Over residues 421 to 437 the composition is skewed to basic and acidic residues; the sequence is EMDKSSQETQRSEHKTH.

This sequence belongs to the perilipin family. As to quaternary structure, interacts with IRGC. Post-translationally, acylated; primarily with C14, C16 and C18 fatty acids. In terms of processing, phosphorylation at Tyr-232 by isoform 1 of CHKA (CHKalpha2) promotes dissociation from lipid droplets: dissociation is followed by recruitment of autophagosome machinery to lipid droplets and subsequent lipid droplet lipolysis. Polyubiquitination of Nt-acetylatable A-PLIN2 by MARCHF6 lead to degradation by 26S proteasomes. As to expression, milk lipid globules.

It is found in the membrane. Its subcellular location is the lipid droplet. Structural component of lipid droplets, which is required for the formation and maintenance of lipid storage droplets. The protein is Perilipin-2 of Homo sapiens (Human).